Here is a 107-residue protein sequence, read N- to C-terminus: MMAADDTMSSKRADNCYKKDRGTMVYTPTDAQQATGKVHEKVYKFFESLYWMYYIHLPYYLMTSFDSFCLHVFFLVVFTLSLFGLLKWVLSLYWATVGYMAYAATGQ.

Residues 72 to 92 (VFFLVVFTLSLFGLLKWVLSL) form a helical membrane-spanning segment.

It localises to the endoplasmic reticulum membrane. In terms of biological role, stimulates the activity of serine palmitoyltransferase (SPT). This Eremothecium gossypii (strain ATCC 10895 / CBS 109.51 / FGSC 9923 / NRRL Y-1056) (Yeast) protein is Serine palmitoyltransferase-regulating protein TSC3 (TSC3).